The chain runs to 299 residues: Heterodisulfide reductase subunit B-like protein (299 aa).

It belongs to the HdrB family. The heterodisulfide reductase is composed of three subunits; HdlA, HdlB and HdlC. It forms a complex with the F420-non-reducing hydrogenase (Mvh), which provides the reducing equivalents to the heterodisulfide reductase.

It localises to the cytoplasm. Functionally, has oxidoreductase activity. The Hdl and Mvh subunits may together mediate electron transfer from hydrogen to an unidentified electron acceptor on the cytoplasmic side of the membrane. The sequence is that of Heterodisulfide reductase subunit B-like protein (hdlB) from Archaeoglobus profundus (strain DSM 5631 / JCM 9629 / NBRC 100127 / Av18).